A 485-amino-acid chain; its full sequence is Glutamyl-tRNA(Gln) amidotransferase subunit A (485 aa).

Catalysis depends on charge relay system residues Lys-76 and Ser-155. The active-site Acyl-ester intermediate is the Ser-179.

It belongs to the amidase family. GatA subfamily. As to quaternary structure, heterotrimer of A, B and C subunits.

The catalysed reaction is L-glutamyl-tRNA(Gln) + L-glutamine + ATP + H2O = L-glutaminyl-tRNA(Gln) + L-glutamate + ADP + phosphate + H(+). Functionally, allows the formation of correctly charged Gln-tRNA(Gln) through the transamidation of misacylated Glu-tRNA(Gln) in organisms which lack glutaminyl-tRNA synthetase. The reaction takes place in the presence of glutamine and ATP through an activated gamma-phospho-Glu-tRNA(Gln). The protein is Glutamyl-tRNA(Gln) amidotransferase subunit A of Marinobacter nauticus (strain ATCC 700491 / DSM 11845 / VT8) (Marinobacter aquaeolei).